Consider the following 381-residue polypeptide: Methanesulfonate monooxygenase (381 aa).

The protein belongs to the SsuD family.

It carries out the reaction an alkanesulfonate + FMNH2 + O2 = an aldehyde + FMN + sulfite + H2O + 2 H(+). Its function is as follows. Catalyzes the desulfonation of aliphatic sulfonates. Shows highest activity with methanesulfonate. In Pseudomonas aeruginosa (strain ATCC 15692 / DSM 22644 / CIP 104116 / JCM 14847 / LMG 12228 / 1C / PRS 101 / PAO1), this protein is Methanesulfonate monooxygenase (msuD).